The chain runs to 235 residues: Glucosamine-6-phosphate deaminase (235 aa).

The Proton acceptor; for enolization step role is filled by aspartate 62. Asparagine 128 functions as the For ring-opening step in the catalytic mechanism. Histidine 130 serves as the catalytic Proton acceptor; for ring-opening step. Glutamate 135 acts as the For ring-opening step in catalysis.

The protein belongs to the glucosamine/galactosamine-6-phosphate isomerase family. NagB subfamily.

The enzyme catalyses alpha-D-glucosamine 6-phosphate + H2O = beta-D-fructose 6-phosphate + NH4(+). It functions in the pathway amino-sugar metabolism; N-acetylneuraminate degradation; D-fructose 6-phosphate from N-acetylneuraminate: step 5/5. Its function is as follows. Catalyzes the reversible isomerization-deamination of glucosamine 6-phosphate (GlcN6P) to form fructose 6-phosphate (Fru6P) and ammonium ion. In Streptococcus pneumoniae (strain JJA), this protein is Glucosamine-6-phosphate deaminase.